Reading from the N-terminus, the 294-residue chain is Putative sugar lactone lactonase (294 aa).

A divalent metal cation is bound by residues E21, N150, and D201. Residue D201 is the Proton donor/acceptor of the active site.

The protein belongs to the SMP-30/CGR1 family. It depends on a divalent metal cation as a cofactor.

Functionally, involved in the degradation of galactose via the DeLey-Doudoroff pathway. This Rhizobium meliloti (strain 1021) (Ensifer meliloti) protein is Putative sugar lactone lactonase.